Here is a 421-residue protein sequence, read N- to C-terminus: Probable dual-specificity RNA methyltransferase RlmN (421 aa).

Residues 1 to 23 are disordered; that stretch reads MTATTAESGRPDQPPTAEAGRPV. The active-site Proton acceptor is the E127. The 240-residue stretch at 133-372 folds into the Radical SAM core domain; that stretch reads YPDRATVCVS…VTTVRDTRGR (240 aa). Cysteines 140 and 378 form a disulfide. [4Fe-4S] cluster contacts are provided by C147, C151, and C154. S-adenosyl-L-methionine-binding positions include 202-203, S236, 259-261, and N335; these read GE and SLH. The active-site S-methylcysteine intermediate is the C378. Residues 383 to 421 form a disordered region; that stretch reads AEPAGKPERTDRPEQVGSDRLVEFGAVGSTTPDGDRVLR. Residues 387–396 are compositionally biased toward basic and acidic residues; sequence GKPERTDRPE.

The protein belongs to the radical SAM superfamily. RlmN family. [4Fe-4S] cluster is required as a cofactor.

The protein localises to the cytoplasm. The catalysed reaction is adenosine(2503) in 23S rRNA + 2 reduced [2Fe-2S]-[ferredoxin] + 2 S-adenosyl-L-methionine = 2-methyladenosine(2503) in 23S rRNA + 5'-deoxyadenosine + L-methionine + 2 oxidized [2Fe-2S]-[ferredoxin] + S-adenosyl-L-homocysteine. It carries out the reaction adenosine(37) in tRNA + 2 reduced [2Fe-2S]-[ferredoxin] + 2 S-adenosyl-L-methionine = 2-methyladenosine(37) in tRNA + 5'-deoxyadenosine + L-methionine + 2 oxidized [2Fe-2S]-[ferredoxin] + S-adenosyl-L-homocysteine. Specifically methylates position 2 of adenine 2503 in 23S rRNA and position 2 of adenine 37 in tRNAs. This Frankia casuarinae (strain DSM 45818 / CECT 9043 / HFP020203 / CcI3) protein is Probable dual-specificity RNA methyltransferase RlmN.